The sequence spans 205 residues: Small ribosomal subunit protein uS4 (205 aa).

Residues serine 94–valine 157 enclose the S4 RNA-binding domain.

This sequence belongs to the universal ribosomal protein uS4 family. In terms of assembly, part of the 30S ribosomal subunit. Contacts protein S5. The interaction surface between S4 and S5 is involved in control of translational fidelity.

Functionally, one of the primary rRNA binding proteins, it binds directly to 16S rRNA where it nucleates assembly of the body of the 30S subunit. In terms of biological role, with S5 and S12 plays an important role in translational accuracy. The sequence is that of Small ribosomal subunit protein uS4 from Rickettsia felis (strain ATCC VR-1525 / URRWXCal2) (Rickettsia azadi).